A 170-amino-acid polypeptide reads, in one-letter code: Large ribosomal subunit protein uL16 (170 aa).

The protein belongs to the universal ribosomal protein uL16 family.

This chain is Large ribosomal subunit protein uL16, found in Methanoculleus marisnigri (strain ATCC 35101 / DSM 1498 / JR1).